Here is an 888-residue protein sequence, read N- to C-terminus: DNA mismatch repair protein MutS (888 aa).

641–648 contributes to the ATP binding site; sequence GPNMAGKS.

The protein belongs to the DNA mismatch repair MutS family.

Its function is as follows. This protein is involved in the repair of mismatches in DNA. It is possible that it carries out the mismatch recognition step. This protein has a weak ATPase activity. This Rickettsia bellii (strain RML369-C) protein is DNA mismatch repair protein MutS.